We begin with the raw amino-acid sequence, 402 residues long: Glutamyl-tRNA reductase (402 aa).

Substrate-binding positions include 48-51 (TCNR), S91, 96-98 (EDQ), and Q102. C49 functions as the Nucleophile in the catalytic mechanism. 171 to 176 (GAGKMG) provides a ligand contact to NADP(+).

This sequence belongs to the glutamyl-tRNA reductase family. As to quaternary structure, homodimer.

It catalyses the reaction (S)-4-amino-5-oxopentanoate + tRNA(Glu) + NADP(+) = L-glutamyl-tRNA(Glu) + NADPH + H(+). It participates in porphyrin-containing compound metabolism; protoporphyrin-IX biosynthesis; 5-aminolevulinate from L-glutamyl-tRNA(Glu): step 1/2. Catalyzes the NADPH-dependent reduction of glutamyl-tRNA(Glu) to glutamate 1-semialdehyde (GSA). This chain is Glutamyl-tRNA reductase, found in Methanothermobacter thermautotrophicus (strain ATCC 29096 / DSM 1053 / JCM 10044 / NBRC 100330 / Delta H) (Methanobacterium thermoautotrophicum).